We begin with the raw amino-acid sequence, 76 residues long: Serine palmitoyltransferase small subunit B (76 aa).

Residues 1-11 (MDFKRVKDYLS) are Cytoplasmic-facing. Residues 12-29 (WLYYQYQIISCCAVLEPW) traverse the membrane as a helical segment. Over 30–36 (EQSMFNT) the chain is Lumenal. The helical transmembrane segment at 37–57 (IILTIFAMVVYTAYVFIPIHI) threads the bilayer. Topologically, residues 58 to 76 (RLAWEFFSKMCGYHSTISN) are cytoplasmic.

This sequence belongs to the SPTSS family. SPTSSB subfamily. Component of the serine palmitoyltransferase (SPT) complex, which is composed of SPTLC1, SPTLC2 or SPTLC3 and SPTSSA or SPTSSB. The heterodimer consisting of SPTLC1 and SPTLC2/SPTLC3 forms the catalytic core of the enzyme, while SPTSSA or SPTSSB subunits determine substrate specificity. SPT also interacts with ORMDL proteins, especially ORMDL3, which negatively regulate SPT activity in the presence of ceramides.

It is found in the endoplasmic reticulum membrane. It functions in the pathway lipid metabolism; sphingolipid metabolism. Component of the serine palmitoyltransferase multisubunit enzyme (SPT) that catalyzes the initial and rate-limiting step in sphingolipid biosynthesis by condensing L-serine and activated acyl-CoA (most commonly palmitoyl-CoA) to form long-chain bases. The SPT complex is composed of SPTLC1, SPTLC2 or SPTLC3 and SPTSSA or SPTSSB. Within this complex, the heterodimer consisting of SPTLC1 and SPTLC2/SPTLC3 forms the catalytic core. Within the SPT complex, SPTSSB stimulates the catalytic activity and plays a role in substrate specificity. SPT complexes with this subunit showing a preference for longer acyl-CoAs. The SPTLC1-SPTLC2-SPTSSB complex shows a strong preference for C18-CoA substrate, while the SPTLC1-SPTLC3-SPTSSB isozyme displays an ability to use a broader range of acyl-CoAs, without apparent preference. The polypeptide is Serine palmitoyltransferase small subunit B (SPTSSB) (Bos taurus (Bovine)).